The chain runs to 295 residues: 4-hydroxy-tetrahydrodipicolinate synthase (295 aa).

Threonine 47 lines the pyruvate pocket. Tyrosine 135 serves as the catalytic Proton donor/acceptor. Catalysis depends on lysine 163, which acts as the Schiff-base intermediate with substrate. Pyruvate is bound at residue isoleucine 204.

Belongs to the DapA family. In terms of assembly, homotetramer; dimer of dimers.

The protein localises to the cytoplasm. It carries out the reaction L-aspartate 4-semialdehyde + pyruvate = (2S,4S)-4-hydroxy-2,3,4,5-tetrahydrodipicolinate + H2O + H(+). The protein operates within amino-acid biosynthesis; L-lysine biosynthesis via DAP pathway; (S)-tetrahydrodipicolinate from L-aspartate: step 3/4. Its function is as follows. Catalyzes the condensation of (S)-aspartate-beta-semialdehyde [(S)-ASA] and pyruvate to 4-hydroxy-tetrahydrodipicolinate (HTPA). The protein is 4-hydroxy-tetrahydrodipicolinate synthase of Caldicellulosiruptor bescii (strain ATCC BAA-1888 / DSM 6725 / KCTC 15123 / Z-1320) (Anaerocellum thermophilum).